The sequence spans 283 residues: Para-Rep C10 (283 aa).

The region spanning 3–96 (SIRAIHWCFT…IDGPWEYGTW (94 aa)) is the CRESS-DNA virus Rep endonuclease domain. The RCR-1 motif lies at 10–13 (CFTL). A divalent metal cation is bound by residues E36 and H42. The short motif at 42–44 (HLQ) is the RCR-2 element. The short motif at 51–71 (KQTTLKKMKELLPGAHLEMAR) is the Nuclear localization signal element. Residue Y79 is the For DNA cleavage activity of the active site. The RCR-3 signature appears at 79 to 82 (YCQK). E84 provides a ligand contact to a divalent metal cation. The Nuclear localization signal signature appears at 96 to 102 (WISTGSH). Residue 172 to 180 (GPHGGEGKS) coordinates ATP.

The protein belongs to the nanoviridea/circoviridae replication-associated protein family. Homooligomer (Potential). Rep binds to repeated DNA motifs (iterons). Requires Mg(2+) as cofactor. Mn(2+) serves as cofactor.

It localises to the host nucleus. It catalyses the reaction ATP + H2O = ADP + phosphate + H(+). Functionally, initiates and terminates the replication only of its own subviral DNA molecule. The closed circular ssDNA genome is first converted to a superhelical dsDNA. Rep binds a specific hairpin at the genome origin of replication. Introduces an endonucleolytic nick within the intergenic region of the genome, thereby initiating the rolling circle replication (RCR). Following cleavage, binds covalently to the 5'-phosphate of DNA as a tyrosyl ester. The cleavage gives rise to a free 3'-OH that serves as a primer for the cellular DNA polymerase. The polymerase synthesizes the (+) strand DNA by rolling circle mechanism. After one round of replication, a Rep-catalyzed nucleotidyl transfer reaction releases a circular single-stranded virus genome, thereby terminating the replication. Displays origin-specific DNA cleavage, nucleotidyl transferase, ATPase and helicase activities. This chain is Para-Rep C10 (C10), found in Milk vetch dwarf C10 alphasatellite (MVDC10A).